The sequence spans 162 residues: Probable chemoreceptor glutamine deamidase CheD (162 aa).

The protein belongs to the CheD family.

It carries out the reaction L-glutaminyl-[protein] + H2O = L-glutamyl-[protein] + NH4(+). Its function is as follows. Probably deamidates glutamine residues to glutamate on methyl-accepting chemotaxis receptors (MCPs), playing an important role in chemotaxis. This is Probable chemoreceptor glutamine deamidase CheD from Syntrophotalea carbinolica (strain DSM 2380 / NBRC 103641 / GraBd1) (Pelobacter carbinolicus).